Reading from the N-terminus, the 624-residue chain is Polycomb group protein EMF2A (624 aa).

The C2H2-type zinc-finger motif lies at 338–359; that stretch reads CPFCLVRCGNFKGLECHMTSSH. The disordered stretch occupies residues 420–445; that stretch reads DAHIMESGSPEETQAESEDDVQEENE. The span at 432 to 445 shows a compositional bias: acidic residues; sequence TQAESEDDVQEENE. The segment at 474–609 is VEFS-box; the sequence is LSANRADPRN…SARTMDTCNR (136 aa).

The protein belongs to the VEFS (VRN2-EMF2-FIS2-SU(Z)12) family. As to quaternary structure, component of the polycomb repressive complex 2 (PRC2), which methylates 'Lys-27' residues of histone H3 (H3K27me3), leading to transcriptional repression of the affected target gene. In terms of tissue distribution, widely expressed. Highly expressed in shoot apical meristem and inflorescence meristem. Expressed in roots, leaves and immature seeds.

Functionally, polycomb group (PcG) protein. PcG proteins act by forming multiprotein complexes, which are required to maintain the transcriptionally repressive state of homeotic genes throughout development. PcG proteins are not required to initiate repression, but to maintain it during later stages of development. They act via the methylation of histones, rendering chromatin heritably changed in its expressibility. In Oryza sativa subsp. japonica (Rice), this protein is Polycomb group protein EMF2A.